Reading from the N-terminus, the 1899-residue chain is Protein TIC 214 (1899 aa).

The next 6 membrane-spanning stretches (helical) occupy residues 23–43 (VVVG…SYLF), 64–84 (FITG…HLAL), 87–107 (PHTI…WNNH), 124–144 (LSIQ…LFIL), 172–192 (VGWL…LVCI), and 217–237 (WTAR…LGVH). 2 disordered regions span residues 256 to 280 (EQKK…TKKE) and 1581 to 1619 (PKDY…GLDL). A compositionally biased stretch (basic and acidic residues) spans 269–280 (EKTFETKETKKE).

The protein belongs to the TIC214 family. Part of the Tic complex.

It is found in the plastid. It localises to the chloroplast inner membrane. Involved in protein precursor import into chloroplasts. May be part of an intermediate translocation complex acting as a protein-conducting channel at the inner envelope. This chain is Protein TIC 214, found in Ceratophyllum demersum (Rigid hornwort).